The following is a 316-amino-acid chain: Pantothenate kinase (316 aa).

95 to 102 is an ATP binding site; sequence GSVAVGKS.

Belongs to the prokaryotic pantothenate kinase family.

It localises to the cytoplasm. The enzyme catalyses (R)-pantothenate + ATP = (R)-4'-phosphopantothenate + ADP + H(+). The protein operates within cofactor biosynthesis; coenzyme A biosynthesis; CoA from (R)-pantothenate: step 1/5. This Enterobacter sp. (strain 638) protein is Pantothenate kinase.